Here is a 220-residue protein sequence, read N- to C-terminus: Protein ABA DEFICIENT 4, chloroplastic (220 aa).

The transit peptide at 1-37 (MGFSSFISQPLSSSLSVMKRNVSAKRSELCLDSSKIR) directs the protein to the chloroplast. The next 4 membrane-spanning stretches (helical) occupy residues 77 to 97 (IASSVFAVGTTAVLPFYTLMV), 112 to 132 (SVPYIILGVLYVYLLYISWTP), 154 to 174 (MFSSEMTLASAWIHLLVVDLF), and 195 to 215 (SLCLLFCPVGIVSHFVTKAII).

Expressed in root vasculature, root hairs, leaves, trichomes, sepals, stamens, stigma, pedicels, siliques and embryo.

It localises to the plastid. Its subcellular location is the chloroplast membrane. In terms of biological role, required for neoxanthin biosynthesis, an intermediary step in abscisic acid (ABA) biosynthesis. Probably not involved directly in the enzymatic conversion of violaxanthin to neoxanthin. Cannot convert violaxanthin to neoxanthin in vitro. Required for ABA biosynthesis in response to drought stress. Required for neoxanthin biosynthesis which is involved in photoprotection of photosystem II (PSII). Neoxanthin acts as an antioxidant within the photosystem PSII supercomplex. This is Protein ABA DEFICIENT 4, chloroplastic from Arabidopsis thaliana (Mouse-ear cress).